A 250-amino-acid polypeptide reads, in one-letter code: Ubiquinone/menaquinone biosynthesis C-methyltransferase UbiE (250 aa).

Residues T74, D94, 122–123 (DA), and S139 contribute to the S-adenosyl-L-methionine site.

This sequence belongs to the class I-like SAM-binding methyltransferase superfamily. MenG/UbiE family.

It carries out the reaction a 2-demethylmenaquinol + S-adenosyl-L-methionine = a menaquinol + S-adenosyl-L-homocysteine + H(+). It catalyses the reaction a 2-methoxy-6-(all-trans-polyprenyl)benzene-1,4-diol + S-adenosyl-L-methionine = a 5-methoxy-2-methyl-3-(all-trans-polyprenyl)benzene-1,4-diol + S-adenosyl-L-homocysteine + H(+). It participates in quinol/quinone metabolism; menaquinone biosynthesis; menaquinol from 1,4-dihydroxy-2-naphthoate: step 2/2. The protein operates within cofactor biosynthesis; ubiquinone biosynthesis. Functionally, methyltransferase required for the conversion of demethylmenaquinol (DMKH2) to menaquinol (MKH2) and the conversion of 2-polyprenyl-6-methoxy-1,4-benzoquinol (DDMQH2) to 2-polyprenyl-3-methyl-6-methoxy-1,4-benzoquinol (DMQH2). The polypeptide is Ubiquinone/menaquinone biosynthesis C-methyltransferase UbiE (Ruegeria sp. (strain TM1040) (Silicibacter sp.)).